The sequence spans 1258 residues: MITSELPVLQDSTNETTAHSDAGSELEETEVKGKRKRGRPGRPPSTNKKPRKSPGEKSRIEAGIRGAGRGRANGHPQQNGDGDPVTLFEVVKLGKSAMQSVVDDWIELYKQDRDIALLDLINFFIQCSGCRGTVRIEMFRNMQNAEIIRKMTEEFDEDSGDYPLTMPGPQWKKFRSNFCEFIGVLIRQCQYSIIYDEYMMDTVISLLTGLSDSQVRAFRHTSTLAAMKLMTALVNVALNLSIHQDNTQRQYEAERNKMIGKRANERLELLLQKRKELQENQDEIENMMNSIFKGIFVHRYRDAIAEIRAICIEEIGVWMKMYSDAFLNDSYLKYVGWTLHDRQGEVRLKCLKALQSLYTNRELFPKLELFTNRFKDRIVSMTLDKEYDVAVEAIRLVTLILHGSEEALSNEDCENVYHLVYSAHRPVAVAAGEFLHKKLFSRHDPQAEEALAKRRGRNSPNGNLIRMLVLFFLESELHEHAAYLVDSLWESSQELLKDWECMTELLLEEPVQGEEAMSDRQESALIELMVCTIRQAAEAHPPVGRGTGKRVLTAKERKTQIDDRNKLTEHFIITLPMLLSKYSADAEKVANLLQIPQYFDLEIYSTGRMEKHLDALLKQIKFVVEKHVESDVLEACSKTYSILCSEEYTIQNRVDIARSQLIDEFVDRFNHSVEDLLQEGEEADDDDIYNVLSTLKRLTSFHNAHDLTKWDLFGNCYRLLKTGIEHGAMPEQIVVQALQCSHYSILWQLVKITDGSPSKEDLLVLRKTVKSFLAVCQQCLSNVNTPVKEQAFMLLCDLLMIFSHQLMTGGREGLQPLVFNPDTGLQSELLSFVMDHVFIDQDEENQSMEGDEEDEANKIEALHKRRNLLAAFSKLIIYDIVDMHAAADIFKHYMKYYNDYGDIIKETLSKTRQIDKIQCAKTLILSLQQLFNELVQEQGPNLDRTSAHVSGIKELARRFALTFGLDQIKTREAVATLHKDGIEFAFKYQNQKGQEYPPPNLAFLEVLSEFSSKLLRQDKKTVHSYLEKFLTEQMMERREDVWLPLISYRNSLVTGGEDDRMSVNSGSSSSKTSSVRSKKGRPPLHRKRVEDESLDNTWLNRTDTMIQTPGPLPTPQLTSTVLRENSRPMGEQIQEPESEHGSEPDFLHNPQMQISWLGQPKLEDLNRKDRTGMNYMKVRAGVRHAVRGLMEEDAEPIFEDVMMSSRSQLEDMNEEFEDTMVIDLPPSRNRRERAELRPDFFDSAAIIEDDSGFGMPMF.

The interval 1-59 (MITSELPVLQDSTNETTAHSDAGSELEETEVKGKRKRGRPGRPPSTNKKPRKSPGEKSR) is disordered. Residues 10–19 (QDSTNETTAH) show a composition bias toward polar residues. A Phosphoserine modification is found at S24. Residues 296-381 (FVHRYRDAIA…NRFKDRIVSM (86 aa)) enclose the SCD domain. Phosphoserine occurs at positions 756, 1062, and 1065. The interval 1055–1148 (GGEDDRMSVN…EHGSEPDFLH (94 aa)) is disordered. Over residues 1062–1075 (SVNSGSSSSKTSSV) the composition is skewed to low complexity. Residues 1076-1087 (RSKKGRPPLHRK) show a composition bias toward basic residues. Position 1093 is a phosphoserine (S1093). The span at 1095 to 1106 (DNTWLNRTDTMI) shows a compositional bias: polar residues. Residues 1137 to 1146 (ESEHGSEPDF) are compositionally biased toward basic and acidic residues. K1161 participates in a covalent cross-link: Glycyl lysine isopeptide (Lys-Gly) (interchain with G-Cter in SUMO2).

The protein belongs to the SCC3 family. In terms of assembly, cohesin complexes are composed of a heterodimer between a SMC1 protein (SMC1A or SMC1B) and SMC3, which are attached via their hinge domain, and RAD21 which link them at their heads, and one STAG protein (STAG1, STAG2 or STAG3). In cohesin complexes, STAG1 is mutually exclusive with STAG2 and STAG3. Interacts directly with RAD21 in cohesin complex. The cohesin complex interacts with the cohesin loading complex subunits NIPBL/Scc2 (via HEAT repeats) and MAU2/Scc4. NIPBL directly contacts all members of the complex, RAD21, SMC1A/B, SMC3 and STAG1. Phosphorylated by PLK1. The large dissociation of cohesin from chromosome arms during prophase is partly due to its phosphorylation.

The protein resides in the nucleus. It localises to the chromosome. Functionally, component of cohesin complex, a complex required for the cohesion of sister chromatids after DNA replication. The cohesin complex apparently forms a large proteinaceous ring within which sister chromatids can be trapped. At anaphase, the complex is cleaved and dissociates from chromatin, allowing sister chromatids to segregate. The cohesin complex may also play a role in spindle pole assembly during mitosis. This Mus musculus (Mouse) protein is Cohesin subunit SA-1 (Stag1).